The chain runs to 93 residues: Small ribosomal subunit protein bS20c (93 aa).

Belongs to the bacterial ribosomal protein bS20 family.

It localises to the plastid. Its subcellular location is the chloroplast. Binds directly to 16S ribosomal RNA. The chain is Small ribosomal subunit protein bS20c from Thalassiosira pseudonana (Marine diatom).